Reading from the N-terminus, the 1624-residue chain is Putative serine/threonine-protein kinase/receptor R831 (1624 aa).

A signal peptide spans 1–25 (MHSVYTKYTIILILLVIYQGLPTNT). 13 N-linked (GlcNAc...) asparagine; by host glycosylation sites follow: Asn-152, Asn-169, Asn-200, Asn-205, Asn-225, Asn-240, Asn-245, Asn-292, Asn-364, Asn-479, Asn-541, Asn-720, and Asn-737. A helical transmembrane segment spans residues 747–767 (VIPIACIFGLLLLTLLIVIIF). The Protein kinase 1 domain maps to 786 to 1049 (LEIGETLGTG…EIMTRLSNIL (264 aa)). Residues 792 to 800 (LGTGGYGEV) and Lys-813 contribute to the ATP site. Asp-908 serves as the catalytic Proton acceptor. The segment covering 1054–1093 (NMTSGTSSSSLSSGGIGKSITDSKSSNSRSSVESSNTSNT) has biased composition (low complexity). Residues 1054 to 1101 (NMTSGTSSSSLSSGGIGKSITDSKSSNSRSSVESSNTSNTFRGIDRHN) are disordered. Residues 1109 to 1252 (TVAFIDIISA…STVNITGKIT (144 aa)) enclose the Guanylate cyclase domain. The Protein kinase 2 domain maps to 1364-1615 (ISIGKQIGLG…MTEVVQQLML (252 aa)). ATP is bound by residues 1370–1378 (IGLGSYGIV) and Lys-1391. Catalysis depends on Asp-1487, which acts as the Proton acceptor.

It is found in the membrane. It carries out the reaction L-seryl-[protein] + ATP = O-phospho-L-seryl-[protein] + ADP + H(+). It catalyses the reaction L-threonyl-[protein] + ATP = O-phospho-L-threonyl-[protein] + ADP + H(+). The protein is Putative serine/threonine-protein kinase/receptor R831 of Acanthamoeba polyphaga (Amoeba).